The sequence spans 295 residues: Pyridoxal 5'-phosphate synthase subunit PdxS (295 aa).

D-ribose 5-phosphate is bound at residue D25. K82 functions as the Schiff-base intermediate with D-ribose 5-phosphate in the catalytic mechanism. G154 provides a ligand contact to D-ribose 5-phosphate. R166 is a D-glyceraldehyde 3-phosphate binding site. Residues G215 and 236 to 237 (GS) contribute to the D-ribose 5-phosphate site.

It belongs to the PdxS/SNZ family. In the presence of PdxT, forms a dodecamer of heterodimers.

It catalyses the reaction aldehydo-D-ribose 5-phosphate + D-glyceraldehyde 3-phosphate + L-glutamine = pyridoxal 5'-phosphate + L-glutamate + phosphate + 3 H2O + H(+). Its pathway is cofactor biosynthesis; pyridoxal 5'-phosphate biosynthesis. Functionally, catalyzes the formation of pyridoxal 5'-phosphate from ribose 5-phosphate (RBP), glyceraldehyde 3-phosphate (G3P) and ammonia. The ammonia is provided by the PdxT subunit. Can also use ribulose 5-phosphate and dihydroxyacetone phosphate as substrates, resulting from enzyme-catalyzed isomerization of RBP and G3P, respectively. This chain is Pyridoxal 5'-phosphate synthase subunit PdxS, found in Listeria innocua serovar 6a (strain ATCC BAA-680 / CLIP 11262).